The following is a 156-amino-acid chain: uncharacterized protein (156 aa).

This is an uncharacterized protein from Aedes vexans (Inland floodwater mosquito).